The following is a 443-amino-acid chain: Xaa-Pro dipeptidase (443 aa).

Mn(2+) contacts are provided by aspartate 246, aspartate 257, histidine 339, glutamate 384, and glutamate 423.

This sequence belongs to the peptidase M24B family. Bacterial-type prolidase subfamily. The cofactor is Mn(2+).

The enzyme catalyses Xaa-L-Pro dipeptide + H2O = an L-alpha-amino acid + L-proline. Its function is as follows. Splits dipeptides with a prolyl residue in the C-terminal position. The protein is Xaa-Pro dipeptidase of Salmonella choleraesuis (strain SC-B67).